The primary structure comprises 456 residues: Alcohol acyl transferase 1 allele GSc (456 aa).

Catalysis depends on proton acceptor residues His-165 and Asn-386.

The protein belongs to the plant acyltransferase family. In terms of tissue distribution, expressed at very low levels in the skin of ripe fruit.

Functionally, involved in the biosynthesis of volatile esters which confer ripe apple fruit flavor. Alcohol acyl transferase that can use a wide range of alcohols as substrate to produce esters. In Malus domestica (Apple), this protein is Alcohol acyl transferase 1 allele GSc.